A 363-amino-acid polypeptide reads, in one-letter code: Lipoyl synthase (363 aa).

Residues cysteine 55, cysteine 60, cysteine 66, cysteine 81, cysteine 85, cysteine 88, and serine 292 each coordinate [4Fe-4S] cluster. Residues 67–281 (WESREATFLI…SKLAKELGFG (215 aa)) enclose the Radical SAM core domain. The interval 338-363 (PSEETPVTTRMAKTPAQSNSVAATIR) is disordered. Polar residues predominate over residues 352-363 (PAQSNSVAATIR).

Belongs to the radical SAM superfamily. Lipoyl synthase family. [4Fe-4S] cluster is required as a cofactor.

It localises to the cytoplasm. The catalysed reaction is [[Fe-S] cluster scaffold protein carrying a second [4Fe-4S](2+) cluster] + N(6)-octanoyl-L-lysyl-[protein] + 2 oxidized [2Fe-2S]-[ferredoxin] + 2 S-adenosyl-L-methionine + 4 H(+) = [[Fe-S] cluster scaffold protein] + N(6)-[(R)-dihydrolipoyl]-L-lysyl-[protein] + 4 Fe(3+) + 2 hydrogen sulfide + 2 5'-deoxyadenosine + 2 L-methionine + 2 reduced [2Fe-2S]-[ferredoxin]. The protein operates within protein modification; protein lipoylation via endogenous pathway; protein N(6)-(lipoyl)lysine from octanoyl-[acyl-carrier-protein]: step 2/2. Functionally, catalyzes the radical-mediated insertion of two sulfur atoms into the C-6 and C-8 positions of the octanoyl moiety bound to the lipoyl domains of lipoate-dependent enzymes, thereby converting the octanoylated domains into lipoylated derivatives. This is Lipoyl synthase from Corynebacterium aurimucosum (strain ATCC 700975 / DSM 44827 / CIP 107346 / CN-1) (Corynebacterium nigricans).